The primary structure comprises 282 residues: Proteasome subunit beta (282 aa).

A propeptide spans 1–54 (MGSHRDLPAGMVNHIFTNSGISSFTEFVGSYAPDLLPGRNETLAAPVGDRIPHA) (removed in mature form; by autocatalysis). T55 serves as the catalytic Nucleophile.

It belongs to the peptidase T1B family. In terms of assembly, the 20S proteasome core is composed of 14 alpha and 14 beta subunits that assemble into four stacked heptameric rings, resulting in a barrel-shaped structure. The two inner rings, each composed of seven catalytic beta subunits, are sandwiched by two outer rings, each composed of seven alpha subunits. The catalytic chamber with the active sites is on the inside of the barrel. Has a gated structure, the ends of the cylinder being occluded by the N-termini of the alpha-subunits. Is capped by the proteasome-associated ATPase, ARC.

The protein localises to the cytoplasm. The enzyme catalyses Cleavage of peptide bonds with very broad specificity.. It participates in protein degradation; proteasomal Pup-dependent pathway. The formation of the proteasomal ATPase ARC-20S proteasome complex, likely via the docking of the C-termini of ARC into the intersubunit pockets in the alpha-rings, may trigger opening of the gate for substrate entry. Interconversion between the open-gate and close-gate conformations leads to a dynamic regulation of the 20S proteasome proteolysis activity. Its function is as follows. Component of the proteasome core, a large protease complex with broad specificity involved in protein degradation. The sequence is that of Proteasome subunit beta from Streptosporangium roseum (strain ATCC 12428 / DSM 43021 / JCM 3005 / KCTC 9067 / NCIMB 10171 / NRRL 2505 / NI 9100).